A 608-amino-acid chain; its full sequence is Albumin 2 (608 aa).

An N-terminal signal peptide occupies residues 1 to 14; that stretch reads MQWLSVCSLLVLLS. Positions 15 to 18 are excised as a propeptide; sequence VLSR. 3 consecutive Albumin domains span residues 19–205, 206–398, and 402–600; these read SQAQ…TFQH, AIAK…AGSD, and KITD…KLVS. 18 disulfide bridges follow: Cys-26-Cys-72, Cys-71-Cys-80, Cys-93-Cys-108, Cys-107-Cys-118, Cys-142-Cys-187, Cys-186-Cys-195, Cys-218-Cys-264, Cys-263-Cys-271, Cys-283-Cys-299, Cys-298-Cys-309, Cys-336-Cys-381, Cys-380-Cys-389, Cys-414-Cys-460, Cys-459-Cys-471, Cys-484-Cys-500, Cys-499-Cys-510, Cys-537-Cys-582, and Cys-581-Cys-590. N-linked (GlcNAc...) asparagine glycosylation occurs at Asn-501.

It belongs to the ALB/AFP/VDB family. As to expression, plasma.

Its subcellular location is the secreted. Its function is as follows. Binds water, Ca(2+), Na(+), K(+), fatty acids, hormones, bilirubin and drugs. Its main function is the regulation of the colloidal osmotic pressure of blood. The protein is Albumin 2 (alb2) of Salmo salar (Atlantic salmon).